Here is a 438-residue protein sequence, read N- to C-terminus: Vasoactive intestinal polypeptide receptor 2 (438 aa).

The signal sequence occupies residues 1–23 (MRTLLPPALLTCWLLAPVNSIHP). Residues 24-124 (ECRFHLEIQE…EDESKITFYI (101 aa)) are Extracellular-facing. Cystine bridges form between cysteine 38/cysteine 61, cysteine 52/cysteine 93, and cysteine 75/cysteine 109. 3 N-linked (GlcNAc...) asparagine glycosylation sites follow: asparagine 58, asparagine 88, and asparagine 92. A helical membrane pass occupies residues 125–150 (LVKAIYTLGYSVSLMSLATGSIILCL). At 151–158 (FRKLHCTR) the chain is on the cytoplasmic side. A helical membrane pass occupies residues 159–180 (NYIHLNLFLSFILRAISVLVKD). Topologically, residues 181 to 203 (DVLYSSSGTLHCPDQPSSWVGCK) are extracellular. The cysteines at positions 202 and 271 are disulfide-linked. A helical membrane pass occupies residues 204 to 228 (LSLVFLQYCIMANFFWLLVEGLYLH). Residues 229 to 239 (TLLVAMLPPRR) are Cytoplasmic-facing. Residues 240–261 (CFLAYLLIGWGLPTVCIGAWTA) traverse the membrane as a helical segment. Over 262 to 280 (ARLYLEDTGCWDTNDHSVP) the chain is Extracellular. A helical membrane pass occupies residues 281-304 (WWVIRIPILISIIVNFVLFISIIR). The Cytoplasmic segment spans residues 305 to 325 (ILLQKLTSPDVGGNDQSQYKR). Residues 326-346 (LAKSTLLLIPLFGVHYMVFAV) form a helical membrane-spanning segment. The Extracellular segment spans residues 347–354 (FPISISSK). The helical transmembrane segment at 355–378 (YQILFELCLGSFQGLVVAVLYCFL) threads the bilayer. Topologically, residues 379–438 (NSEVQCELKRKWRSRCPTPSASRDYRVCGSSFSRNGSEGALQFHRGSRAQSFLQTETSVI) are cytoplasmic.

Belongs to the G-protein coupled receptor 2 family. Interacts with ADCYAP1/PACAP (via N-terminal extracellular domain); activated by PACAP27 and CAPAC38 neuropeptides. Interacts with VIP; the interaction results in VIPR1 activation. In terms of tissue distribution, expressed in CD4+ T-cells, but not in CD8+ T-cells. Expressed in the T-cell lines Jurkat, Peer, MOLT-4, HSB, YT and SUP-T1, but not in the T-cell lines HARRIS and HuT 78.

Its subcellular location is the cell membrane. G protein-coupled receptor activated by the neuropeptides vasoactive intestinal peptide (VIP) and pituitary adenylate cyclase-activating polypeptide (ADCYAP1/PACAP). Binds VIP and both PACAP27 and PACAP38 bioactive peptides with the following order of potency PACAP38 = VIP &gt; PACAP27. Ligand binding causes a conformation change that triggers signaling via guanine nucleotide-binding proteins (G proteins) and modulates the activity of downstream effectors. Activates cAMP-dependent pathway. May be coupled to phospholipase C. This is Vasoactive intestinal polypeptide receptor 2 from Homo sapiens (Human).